A 220-amino-acid chain; its full sequence is Phosphatidylserine decarboxylase proenzyme (220 aa).

Catalysis depends on Ser-188, which acts as the Schiff-base intermediate with substrate; via pyruvic acid. At Ser-188 the chain carries Pyruvic acid (Ser); by autocatalysis.

This sequence belongs to the phosphatidylserine decarboxylase family. PSD-A subfamily. As to quaternary structure, heterodimer of a large membrane-associated beta subunit and a small pyruvoyl-containing alpha subunit. Pyruvate is required as a cofactor. Is synthesized initially as an inactive proenzyme. Formation of the active enzyme involves a self-maturation process in which the active site pyruvoyl group is generated from an internal serine residue via an autocatalytic post-translational modification. Two non-identical subunits are generated from the proenzyme in this reaction, and the pyruvate is formed at the N-terminus of the alpha chain, which is derived from the carboxyl end of the proenzyme. The post-translation cleavage follows an unusual pathway, termed non-hydrolytic serinolysis, in which the side chain hydroxyl group of the serine supplies its oxygen atom to form the C-terminus of the beta chain, while the remainder of the serine residue undergoes an oxidative deamination to produce ammonia and the pyruvoyl prosthetic group on the alpha chain.

The protein localises to the cell membrane. It carries out the reaction a 1,2-diacyl-sn-glycero-3-phospho-L-serine + H(+) = a 1,2-diacyl-sn-glycero-3-phosphoethanolamine + CO2. Its pathway is phospholipid metabolism; phosphatidylethanolamine biosynthesis; phosphatidylethanolamine from CDP-diacylglycerol: step 2/2. In terms of biological role, catalyzes the formation of phosphatidylethanolamine (PtdEtn) from phosphatidylserine (PtdSer). This Parabacteroides distasonis (strain ATCC 8503 / DSM 20701 / CIP 104284 / JCM 5825 / NCTC 11152) protein is Phosphatidylserine decarboxylase proenzyme.